An 85-amino-acid chain; its full sequence is Probable Thioredoxin (85 aa).

Positions 2–85 (VVKIEVFTSP…LFEAISDEIE (84 aa)) constitute a Glutaredoxin domain. Residues Cys-13 and Cys-16 are joined by a disulfide bond.

This sequence belongs to the glutaredoxin family.

It is found in the cytoplasm. Does not function as a glutathione-disulfide oxidoreductase in the presence of glutathione and glutathione reductase. May be a component of a ribonucleotide-reducing system distinct from the previously described systems utilizing thioredoxin or glutaredoxin. This is Probable Thioredoxin from Methanothermobacter marburgensis (strain ATCC BAA-927 / DSM 2133 / JCM 14651 / NBRC 100331 / OCM 82 / Marburg) (Methanobacterium thermoautotrophicum).